The primary structure comprises 350 residues: N-acetyl-gamma-glutamyl-phosphate reductase (350 aa).

Residue Cys153 is part of the active site.

It belongs to the NAGSA dehydrogenase family. Type 1 subfamily.

Its subcellular location is the cytoplasm. It carries out the reaction N-acetyl-L-glutamate 5-semialdehyde + phosphate + NADP(+) = N-acetyl-L-glutamyl 5-phosphate + NADPH + H(+). It functions in the pathway amino-acid biosynthesis; L-arginine biosynthesis; N(2)-acetyl-L-ornithine from L-glutamate: step 3/4. Catalyzes the NADPH-dependent reduction of N-acetyl-5-glutamyl phosphate to yield N-acetyl-L-glutamate 5-semialdehyde. The sequence is that of N-acetyl-gamma-glutamyl-phosphate reductase from Thermosynechococcus vestitus (strain NIES-2133 / IAM M-273 / BP-1).